The primary structure comprises 370 residues: MQRLVLVSILLCANFSCYPDTFATPQRASIKALRNANLRRDESNHLTDLYQREENIQVTSNGHVQSPRFPNSYPRNLLLTWWLRSQEKTRIQLSFDHQFGLEEAENDICRYDFVEVEEVSESSTVVRGRWCGHKEIPPRITSRTNQIKITFKSDDYFVAKPGFKIYYSFVEDFQPEAASETNWESVTSSFSGVSYHSPSITDPTLTADALDKTVAEFDTVEDLLKHFNPVSWQDDLENLYLDTPHYRGRSYHDRKSKVDLDRLNDDVKRYSCTPRNHSVNLREELKLTNAVFFPRCLLVQRCGGNCGCGTVNWKSCTCSSGKTVKKYHEVLKFEPGHFKRRGKAKNMALVDIQLDHHERCDCICSSRPPR.

Residues 1 to 23 (MQRLVLVSILLCANFSCYPDTFA) form the signal peptide. One can recognise a CUB domain in the interval 52–170 (REENIQVTSN…PGFKIYYSFV (119 aa)). The cysteines at positions 109 and 131 are disulfide-linked. N-linked (GlcNAc...) asparagine glycosylation is present at N276. 2 disulfide bridges follow: C302/C360 and C306/C362.

It belongs to the PDGF/VEGF growth factor family. As to quaternary structure, homodimer; disulfide-linked. Interacts with PDGFRB homodimers, and with heterodimers formed by PDGFRA and PDGFRB. Activated by proteolytic cleavage. Proteolytic removal of the N-terminal CUB domain releasing the core domain is necessary for unmasking the receptor-binding epitopes of the core domain. Cleavage after Arg-247 or Arg-249 by urokinase plasminogen activator gives rise to the active form. As to expression, expressed at high levels in developing heart, lung, kidney and some muscle derivatives. Moderately expressed in liver, brain and testis. In the kidney, localized to glomerular mesangial cells and vascular smooth muscle cells. Up-regulated in areas of renal fibrosis. In mice with unilateral ureteral obstruction, expressed in interstitial cells at day 4, with an increased to maximal expression at day 14.

It is found in the secreted. Functionally, growth factor that plays an essential role in the regulation of embryonic development, cell proliferation, cell migration, survival and chemotaxis. Potent mitogen for cells of mesenchymal origin. Plays an important role in wound healing. Has oncogenic potential and can induce tumor formation. Induces macrophage recruitment, increased interstitial pressure, and blood vessel maturation during angiogenesis. Can initiate events that lead to a mesangial proliferative glomerulonephritis, including influx of monocytes and macrophages and production of extracellular matrix. The polypeptide is Platelet-derived growth factor D (Pdgfd) (Mus musculus (Mouse)).